Here is a 353-residue protein sequence, read N- to C-terminus: Methionine import ATP-binding protein MetN (353 aa).

In terms of domain architecture, ABC transporter spans 7–249 (LENIDVTFKQ…PKEELSRQFV (243 aa)). 41-48 (GYSGAGKS) lines the ATP pocket.

This sequence belongs to the ABC transporter superfamily. Methionine importer (TC 3.A.1.24) family. In terms of assembly, the complex is composed of two ATP-binding proteins (MetN), two transmembrane proteins (MetI) and a solute-binding protein (MetQ).

The protein localises to the cell membrane. It carries out the reaction L-methionine(out) + ATP + H2O = L-methionine(in) + ADP + phosphate + H(+). The catalysed reaction is D-methionine(out) + ATP + H2O = D-methionine(in) + ADP + phosphate + H(+). Its function is as follows. Part of the ABC transporter complex MetNIQ involved in methionine import. Responsible for energy coupling to the transport system. The protein is Methionine import ATP-binding protein MetN of Ligilactobacillus salivarius (strain UCC118) (Lactobacillus salivarius).